The primary structure comprises 606 residues: V-type proton ATPase catalytic subunit A (606 aa).

Position 2 is an N-acetylalanine (alanine 2). 240–247 (AFGCGKTV) is an ATP binding site.

Belongs to the ATPase alpha/beta chains family. V-ATPase is a heteromultimeric enzyme made up of two complexes: the ATP-hydrolytic V1 complex and the proton translocation V0 complex. The V1 complex consists of three catalytic AB heterodimers that form a heterohexamer, three peripheral stalks each consisting of EG heterodimers, one central rotor including subunits D and F, and the regulatory subunits C and H. The proton translocation complex V0 consists of the proton transport subunit a, a ring of proteolipid subunits c9c'', rotary subunit d, subunits e and f, and the accessory subunits vah-19/Ac45 and vah-20/PRR. In terms of tissue distribution, expressed in proximal but not distal germ cells.

The catalysed reaction is ATP + H2O + 4 H(+)(in) = ADP + phosphate + 5 H(+)(out). Its activity is regulated as follows. ATP hydrolysis occurs at the interface between the nucleotide-binding domains of subunits A and B. ATP hydrolysis triggers a conformational change in the subunits D and F, which induces a shift of subunit d. The c-ring is subsequently rotated and results in a continuous proton translocation across the membrane. Catalytic subunit of the V1 complex of vacuolar(H+)-ATPase (V-ATPase), a multisubunit enzyme composed of a peripheral complex (V1) that hydrolyzes ATP and a membrane integral complex (V0) that translocates protons. V-ATPase is responsible for acidifying and maintaining the pH of intracellular compartments and in some cell types, is targeted to the plasma membrane, where it is responsible for acidifying the extracellular environment. Required along with other vacuolar ATPase components for the removal of protein aggregates which form in immature oocytes in the distal gonad. This removal occurs as the oocytes mature and move to the proximal gonad, is triggered by the introduction of sperm through mating and occurs before fertilization. The introduction of sperm triggers V-ATPase accumulation in proximal oocytes and induces lysosomal acidification which leads to engulfing of protein aggregates by lysosomes and subsequent clearance of the aggregates. Lysosomal acidification also leads to changes in mitochondrial morphology and function. Mitochondria in distal immature oocytes are fragmented, produce high levels of reactive oxygen species (ROS) and have high membrane potential, indicative of metabolic inactivity. In contrast, mitochondria in proximal mature oocytes are tubular with lower ROS levels and membrane potential, indicative of an active metabolic state required for aggregate mobilization before clearance. Involved in receptor-mediated endocytosis. The sequence is that of V-type proton ATPase catalytic subunit A from Caenorhabditis elegans.